Here is a 178-residue protein sequence, read N- to C-terminus: Small ribosomal subunit protein uS4 (178 aa).

In terms of domain architecture, S4 RNA-binding spans 104 to 166; sequence RRLQTMVYKK…PNSPMASENH (63 aa). A disordered region spans residues 157–178; that stretch reads PNSPMASENHPERTAAVSEENQ.

Belongs to the universal ribosomal protein uS4 family. In terms of assembly, part of the 30S ribosomal subunit. Contacts protein S5. The interaction surface between S4 and S5 is involved in control of translational fidelity.

In terms of biological role, one of the primary rRNA binding proteins, it binds directly to 16S rRNA where it nucleates assembly of the body of the 30S subunit. Functionally, with S5 and S12 plays an important role in translational accuracy. In Methanococcus maripaludis (strain C7 / ATCC BAA-1331), this protein is Small ribosomal subunit protein uS4.